The sequence spans 159 residues: uncharacterized protein (159 aa).

A run of 3 helical transmembrane segments spans residues 16–36 (IVLPLVQIIHVSGHSFMAFIF), 84–104 (VYAGGCLFNLITIFAINLLII), and 112–132 (VFFYQFVYFSTYYVFFALLPV).

Its subcellular location is the cell membrane. This is an uncharacterized protein from Bacillus subtilis (strain 168).